The chain runs to 78 residues: Large ribosomal subunit protein bL28 (78 aa).

The segment at 1-24 is disordered; it reads MSRVCQVTGKRPAVGNNRSHANNA.

Belongs to the bacterial ribosomal protein bL28 family.

This chain is Large ribosomal subunit protein bL28, found in Aeromonas salmonicida (strain A449).